The sequence spans 127 residues: Large-conductance mechanosensitive channel (127 aa).

A run of 3 helical transmembrane segments spans residues 9–29 (EFAM…GVAF), 32–52 (IVTA…LGGV), and 75–95 (VIDF…INLL).

It belongs to the MscL family. Homopentamer.

The protein resides in the cell inner membrane. Its function is as follows. Channel that opens in response to stretch forces in the membrane lipid bilayer. May participate in the regulation of osmotic pressure changes within the cell. The sequence is that of Large-conductance mechanosensitive channel from Legionella pneumophila (strain Corby).